Here is a 580-residue protein sequence, read N- to C-terminus: Long-chain-fatty-acid--AMP ligase FadD28 (580 aa).

A disordered region spans residues 421–440 (SERTFGGKIVTPSPGTPEGP).

The protein belongs to the ATP-dependent AMP-binding enzyme family.

It catalyses the reaction holo-[mycocerosate synthase] + a long-chain fatty acid + ATP = a long-chain fatty acyl-[mycocerosate synthase] + AMP + diphosphate. The catalysed reaction is a long-chain fatty acid + ATP + H(+) = a long-chain fatty acyl-AMP + diphosphate. The enzyme catalyses holo-[mycocerosate synthase] + a long-chain fatty acyl-AMP = a long-chain fatty acyl-[mycocerosate synthase] + AMP + H(+). It functions in the pathway lipid metabolism; fatty acid biosynthesis. Its function is as follows. Involved in the biosynthesis of phthiocerol dimycocerosate (PDIM), a cell wall-associated lipid found only in pathogenic mycobacteria. Catalyzes the activation of long-chain fatty acids as acyl-adenylates (acyl-AMP), which are then transferred to the multifunctional polyketide synthase Mas for further chain extension. In Mycobacterium tuberculosis (strain CDC 1551 / Oshkosh), this protein is Long-chain-fatty-acid--AMP ligase FadD28 (fadD28).